We begin with the raw amino-acid sequence, 472 residues long: Methanethiol oxidase (472 aa).

The protein belongs to the selenium-binding protein family.

It is found in the nucleus. It localises to the cytoplasm. The protein resides in the cytosol. Its subcellular location is the membrane. It carries out the reaction methanethiol + O2 + H2O = hydrogen sulfide + formaldehyde + H2O2 + H(+). It participates in organosulfur degradation. Its function is as follows. Catalyzes the oxidation of methanethiol, an organosulfur compound known to be produced in substantial amounts by gut bacteria. Selenium-binding protein which may be involved in the sensing of reactive xenobiotics in the cytoplasm. May be involved in intra-Golgi protein transport. This Xenopus laevis (African clawed frog) protein is Methanethiol oxidase (selenbp1-b).